The sequence spans 109 residues: Small ribosomal subunit protein bS6 (109 aa).

The protein belongs to the bacterial ribosomal protein bS6 family.

Binds together with bS18 to 16S ribosomal RNA. This Ehrlichia ruminantium (strain Gardel) protein is Small ribosomal subunit protein bS6.